We begin with the raw amino-acid sequence, 163 residues long: Ribonuclease H (163 aa).

In terms of domain architecture, RNase H type-1 spans 4 to 146; it reads SPKKVLIYTD…CDRLAVRASQ (143 aa). Positions 13, 51, 73, and 138 each coordinate Mg(2+).

This sequence belongs to the RNase H family. As to quaternary structure, monomer. Mg(2+) is required as a cofactor.

The protein localises to the cytoplasm. The catalysed reaction is Endonucleolytic cleavage to 5'-phosphomonoester.. In terms of biological role, endonuclease that specifically degrades the RNA of RNA-DNA hybrids. This chain is Ribonuclease H, found in Rippkaea orientalis (strain PCC 8801 / RF-1) (Cyanothece sp. (strain PCC 8801)).